The following is an 822-amino-acid chain: Molybdenum cofactor sulfurase (822 aa).

Lys239 is subject to N6-(pyridoxal phosphate)lysine. The active site involves Cys401. The disordered stretch occupies residues 633–666 (TRISNPTRSSRRSQRALMPGSFPEDPSPTSEQPP). Positions 643-820 (RRSQRALMPG…VMVGDVVTPQ (178 aa)) constitute an MOSC domain.

Belongs to the class-V pyridoxal-phosphate-dependent aminotransferase family. MOCOS subfamily. The cofactor is pyridoxal 5'-phosphate.

It carries out the reaction Mo-molybdopterin + L-cysteine + AH2 = thio-Mo-molybdopterin + L-alanine + A + H2O. Its pathway is cofactor biosynthesis; molybdopterin biosynthesis. In terms of biological role, sulfurates the molybdenum cofactor. Sulfation of molybdenum is essential for xanthine dehydrogenase (XDH) and aldehyde oxidase (ADO) enzymes in which molybdenum cofactor is liganded by 1 oxygen and 1 sulfur atom in active form. This chain is Molybdenum cofactor sulfurase, found in Aspergillus oryzae (strain ATCC 42149 / RIB 40) (Yellow koji mold).